A 439-amino-acid polypeptide reads, in one-letter code: MRFQLFYILGLLSVTSLTHAASNLICYYDSNSYLRQGLAKMHTNELDLALQFCTHLVYGYAGLKSGTLELFSLNVDLDMFYYKDITALRQKFPQLKILLSVGGDRDVDEAHPNKYVELLEANRTAQQNFIDSSMILLKRNGFDGLDLAFQLPRNKPRKVHGSLGSYWKSFKKLFTGDFVVDPQAEEHKSQFTDLVGNIKNAFRSANLMLSLTVLPNVNSTWYFDVPKLHPQFDYINLAAFDFLTPLRNPEEADFTAPIFFQDEQNRLPHLNVEFQINYWLQNHCPGQKLNLGIASYGRAWKLSKGSGLSGAPIVHETCGVAPGGIQIQSAEGLLSWPEICSKLSQNASAQYRGELAPLRKVTDLTQKYGNYALRPADDNGDFGVWLSFDDPDFAGIKAVYAKGKGLGGIALFDLSYDDFRGLCTGQKYPILRSIKYFMG.

The signal sequence occupies residues Met1–Ala20. Residues Ser22–Gly439 form the GH18 domain. A disulfide bridge links Cys26 with Cys53. Asn122, Asn218, and Asn346 each carry an N-linked (GlcNAc...) asparagine glycan. Cys340 and Cys423 are oxidised to a cystine.

Belongs to the glycosyl hydrolase 18 family. IDGF subfamily. In terms of tissue distribution, primarily expressed in yolk cells and fat body. In larvae, it is expressed in large salivary gland cells and weakly expressed in imaginal disks. Less expressed than Idgf2 and Idgf4.

Its subcellular location is the secreted. Functionally, cooperates with insulin-like peptides to stimulate the proliferation, polarization and motility of imaginal disk cells. May act by stabilizing the binding of insulin-like peptides to its receptor through a simultaneous interaction with both molecules to form a multiprotein signaling complex. This is Chitinase-like protein Idgf1 (Idgf1) from Drosophila melanogaster (Fruit fly).